The chain runs to 342 residues: S-adenosylmethionine:tRNA ribosyltransferase-isomerase (342 aa).

The protein belongs to the QueA family. Monomer.

Its subcellular location is the cytoplasm. It catalyses the reaction 7-aminomethyl-7-carbaguanosine(34) in tRNA + S-adenosyl-L-methionine = epoxyqueuosine(34) in tRNA + adenine + L-methionine + 2 H(+). The protein operates within tRNA modification; tRNA-queuosine biosynthesis. Transfers and isomerizes the ribose moiety from AdoMet to the 7-aminomethyl group of 7-deazaguanine (preQ1-tRNA) to give epoxyqueuosine (oQ-tRNA). In Streptococcus pyogenes serotype M3 (strain ATCC BAA-595 / MGAS315), this protein is S-adenosylmethionine:tRNA ribosyltransferase-isomerase.